Consider the following 671-residue polypeptide: UBA domain-containing protein RUP1 (671 aa).

Positions 1 to 41 constitute a UBA domain; that stretch reads MMDNQAVKSLLEMGIPHEVAVDALQRTGGNLEAAVNFIFSN. Residue Ser56 is modified to Phosphoserine. A disordered region spans residues 68-87; that stretch reads GTKPCDVPNNGDQDIDMPDV. The stretch at 432-501 forms a coiled coil; it reads SKRKQARTRS…LNSARAAKME (70 aa). The disordered stretch occupies residues 643–671; the sequence is DGMGDPEQATNNINNGNDNDNDDDIDSDN. Residues 661–671 show a composition bias toward acidic residues; it reads NDNDDDIDSDN.

In terms of assembly, forms a ternary complex with RSP5 and UBP2.

The protein localises to the cytoplasm. Its subcellular location is the nucleus. Modulates the activity of the RSP5 HECT ubiquitin-protein ligase through its mediation of the interaction between RSP5 and the deubiquitinase UBP2. Involved in regulation of cell wall homeostasis. This is UBA domain-containing protein RUP1 (RUP1) from Saccharomyces cerevisiae (strain ATCC 204508 / S288c) (Baker's yeast).